Here is a 418-residue protein sequence, read N- to C-terminus: Tyrosine--tRNA ligase (418 aa).

Residue Tyr-34 participates in L-tyrosine binding. A 'HIGH' region motif is present at residues 39-48 (PTADSLHLGH). Residues Tyr-169 and Gln-173 each contribute to the L-tyrosine site. The 'KMSKS' region motif lies at 229 to 233 (KFGKS). An ATP-binding site is contributed by Lys-232. The 67-residue stretch at 352-418 (LNLVDMLVTA…GKKKYAVLTY (67 aa)) folds into the S4 RNA-binding domain.

The protein belongs to the class-I aminoacyl-tRNA synthetase family. TyrS type 1 subfamily. As to quaternary structure, homodimer.

The protein resides in the cytoplasm. The catalysed reaction is tRNA(Tyr) + L-tyrosine + ATP = L-tyrosyl-tRNA(Tyr) + AMP + diphosphate + H(+). Its function is as follows. Catalyzes the attachment of tyrosine to tRNA(Tyr) in a two-step reaction: tyrosine is first activated by ATP to form Tyr-AMP and then transferred to the acceptor end of tRNA(Tyr). In Streptococcus pyogenes serotype M5 (strain Manfredo), this protein is Tyrosine--tRNA ligase.